The following is a 203-amino-acid chain: Endothelin-1 (203 aa).

Positions 1-25 are cleaved as a signal peptide; it reads MDYFPMIIALLFVAFQGAPETAVLG. Residues 26-50 constitute a propeptide that is removed on maturation; sequence AELSPEAESQGETPSPHASWRPRRS. A disordered region spans residues 27–48; the sequence is ELSPEAESQGETPSPHASWRPR. 2 disulfide bridges follow: C53–C67 and C55–C63. A propeptide spanning residues 83 to 203 is cleaved from the precursor; the sequence is YGLGSPSRSR…DKKVTHNRTH (121 aa). The segment at 110–124 is endothelin-like; it reads CQCASQKDKKCWSFC. N200 carries an N-linked (GlcNAc...) asparagine glycan.

Belongs to the endothelin/sarafotoxin family.

Its subcellular location is the secreted. Its function is as follows. Endothelins are endothelium-derived vasoconstrictor peptides. Probable ligand for G-protein coupled receptors EDNRA and EDNRB which activates PTK2B, BCAR1, BCAR3 and, GTPases RAP1 and RHOA cascade in glomerular mesangial cells. Also binds the DEAR/FBXW7-AS1 receptor. Promotes mesenteric arterial wall remodeling via activation of ROCK signaling and subsequent colocalization of NFATC3 with F-actin filaments. NFATC3 then translocates to the nucleus where it subsequently promotes the transcription of the smooth muscle hypertrophy and differentiation marker ACTA2. The sequence is that of Endothelin-1 (EDN1) from Sus scrofa (Pig).